The primary structure comprises 469 residues: MAKTLYEKLFDAHVVYEAAGETPILYINRHLIHEVTSPQAFDGLRVAGRQVRQIGKTFGTMDHSISTQVRDVNKLEGQAKIQVLELAKNCEANGISLFDMQTKEQGIVHVMGPEQGLTLPGMTIVCGDSHTATHGAFGALAFGIGTSEVEHVLATQTLKQARAKSMKVEVRGKVNPGITAKDIVLAIIGKTTMAGGTGHVVEFCGEAIRDLSMEGRMTVCNMAIEFGAKAGLVAPDETTFAYLKGRPHAPKGKDWDDAVEYWKTLKSDDDAVFDSVVVLEAKDIAPQVTWGTNPGQVIGIDQVVPNPQEMADPVTKASAEKALAYIGLDANTDMKNIPVDQVFIGSCTNSRIEDLRAAAAVMKGRKKADNVKRVLVVPGSGLVKEQAEKEGLDKIFIEAGAEWRNPGCSMCLGMNDDRLGEWERCASTSNRNFEGRQGRNGRTHLVSPAMAAAAAMFGKFVDIRHVELN.

Positions 347, 408, and 411 each coordinate [4Fe-4S] cluster.

This sequence belongs to the aconitase/IPM isomerase family. LeuC type 1 subfamily. In terms of assembly, heterodimer of LeuC and LeuD. The cofactor is [4Fe-4S] cluster.

The catalysed reaction is (2R,3S)-3-isopropylmalate = (2S)-2-isopropylmalate. It participates in amino-acid biosynthesis; L-leucine biosynthesis; L-leucine from 3-methyl-2-oxobutanoate: step 2/4. Functionally, catalyzes the isomerization between 2-isopropylmalate and 3-isopropylmalate, via the formation of 2-isopropylmaleate. In Actinobacillus pleuropneumoniae serotype 7 (strain AP76), this protein is 3-isopropylmalate dehydratase large subunit.